A 371-amino-acid chain; its full sequence is MTDIKKVNLLGLSPEKLIEFFESIGEKKFRATQVIKWIHQKGAESFEEMTDVSKALRAKLEQICEIRGPEVVSQNISTDGTRKWIIRTEGGKNDCVETVLIPDGDRATLCVSSQVGCSLDCSFCSTGKQGFNRNLTPAEIIGQVWIAIKSFGPMDPNGPRRVTNVVMMGMGEPLMNFEPVVDAMILMMHDHAYGLSKRRVTLSTSGVVPKIYELVKRTDVSLAISLHAPNDALRNELVPINKKYPIAELLEACQFYLENLPDKRHITIEYTLMSGVNDNEEQAHELAELLKVLECKINLIPFNPFPHSGYEKPSNNRTRRFQKILADAGYTVTVRTTRGDDIDAACGQLVGDFHDKTRRSQKYIELREVKS.

The active-site Proton acceptor is E97. The region spanning 103 to 341 (DGDRATLCVS…VTVRTTRGDD (239 aa)) is the Radical SAM core domain. C110 and C346 form a disulfide bridge. 3 residues coordinate [4Fe-4S] cluster: C117, C121, and C124. Residues 171–172 (GE), S203, 225–227 (SLH), and N303 each bind S-adenosyl-L-methionine. The active-site S-methylcysteine intermediate is C346.

The protein belongs to the radical SAM superfamily. RlmN family. Requires [4Fe-4S] cluster as cofactor.

It is found in the cytoplasm. The enzyme catalyses adenosine(2503) in 23S rRNA + 2 reduced [2Fe-2S]-[ferredoxin] + 2 S-adenosyl-L-methionine = 2-methyladenosine(2503) in 23S rRNA + 5'-deoxyadenosine + L-methionine + 2 oxidized [2Fe-2S]-[ferredoxin] + S-adenosyl-L-homocysteine. The catalysed reaction is adenosine(37) in tRNA + 2 reduced [2Fe-2S]-[ferredoxin] + 2 S-adenosyl-L-methionine = 2-methyladenosine(37) in tRNA + 5'-deoxyadenosine + L-methionine + 2 oxidized [2Fe-2S]-[ferredoxin] + S-adenosyl-L-homocysteine. Functionally, specifically methylates position 2 of adenine 2503 in 23S rRNA and position 2 of adenine 37 in tRNAs. m2A2503 modification seems to play a crucial role in the proofreading step occurring at the peptidyl transferase center and thus would serve to optimize ribosomal fidelity. This chain is Dual-specificity RNA methyltransferase RlmN, found in Marinomonas sp. (strain MWYL1).